The sequence spans 456 residues: ATP synthase subunit beta 1 (456 aa).

An ATP-binding site is contributed by 152-159 (GGAGVGKS).

This sequence belongs to the ATPase alpha/beta chains family. As to quaternary structure, F-type ATPases have 2 components, CF(1) - the catalytic core - and CF(0) - the membrane proton channel. CF(1) has five subunits: alpha(3), beta(3), gamma(1), delta(1), epsilon(1). CF(0) has three main subunits: a(1), b(2) and c(9-12). The alpha and beta chains form an alternating ring which encloses part of the gamma chain. CF(1) is attached to CF(0) by a central stalk formed by the gamma and epsilon chains, while a peripheral stalk is formed by the delta and b chains.

The protein resides in the cell membrane. The enzyme catalyses ATP + H2O + 4 H(+)(in) = ADP + phosphate + 5 H(+)(out). Its function is as follows. Produces ATP from ADP in the presence of a proton gradient across the membrane. The catalytic sites are hosted primarily by the beta subunits. This chain is ATP synthase subunit beta 1, found in Listeria innocua serovar 6a (strain ATCC BAA-680 / CLIP 11262).